The following is a 106-amino-acid chain: Putative cytochrome c oxidase subunit 7A3, mitochondrial (106 aa).

The transit peptide at 1–23 (MLWNLLALHQIGQRTISTASHRH) directs the protein to the mitochondrion.

The protein belongs to the cytochrome c oxidase VIIa family.

Its subcellular location is the mitochondrion inner membrane. The polypeptide is Putative cytochrome c oxidase subunit 7A3, mitochondrial (COX7A2P2) (Homo sapiens (Human)).